We begin with the raw amino-acid sequence, 121 residues long: Small ribosomal subunit protein uS13 (121 aa).

The segment at 94–121 is disordered; that stretch reads GLPMRGQRTRTNARTRKGPRKGAAALKK.

The protein belongs to the universal ribosomal protein uS13 family. Part of the 30S ribosomal subunit. Forms a loose heterodimer with protein S19. Forms two bridges to the 50S subunit in the 70S ribosome.

In terms of biological role, located at the top of the head of the 30S subunit, it contacts several helices of the 16S rRNA. In the 70S ribosome it contacts the 23S rRNA (bridge B1a) and protein L5 of the 50S subunit (bridge B1b), connecting the 2 subunits; these bridges are implicated in subunit movement. Contacts the tRNAs in the A and P-sites. The chain is Small ribosomal subunit protein uS13 from Delftia acidovorans (strain DSM 14801 / SPH-1).